The following is a 377-amino-acid chain: Histidinol-phosphate aminotransferase (377 aa).

Lysine 232 carries the N6-(pyridoxal phosphate)lysine modification.

The protein belongs to the class-II pyridoxal-phosphate-dependent aminotransferase family. Histidinol-phosphate aminotransferase subfamily. Homodimer. Requires pyridoxal 5'-phosphate as cofactor.

It catalyses the reaction L-histidinol phosphate + 2-oxoglutarate = 3-(imidazol-4-yl)-2-oxopropyl phosphate + L-glutamate. It participates in amino-acid biosynthesis; L-histidine biosynthesis; L-histidine from 5-phospho-alpha-D-ribose 1-diphosphate: step 7/9. In Mycobacterium sp. (strain JLS), this protein is Histidinol-phosphate aminotransferase.